Reading from the N-terminus, the 971-residue chain is MTVKNETIDYSKTLYLPQTNFPMRGRLPQKELELIARWDNMGLYAQLRQQAKDRPLYILHDGPPYANGHIHIGHALNKVLKDVIIRSFQMRGFNANYVPGWDCHGLPIEWKIEEKYRAQGKNKDDVPLNEFRQECREFAKYWITVQSEEFKRLGVVGDFNSPYTTMAFHAEARIASELMKFAMSGQIYRGSKPVMWSVVERTALAEAEIEYHDYESEVIWVKFPVLQADSSDLCGAYVVIWTTTPWTIPGNRAVSYSSQISYGVYEVASTQNDFGPQVGERLLFADALAMSCAEKAKLVLKRLRIISADELKTLFLFHPLKGFAGSYNDKIAMLDGAHVTENAGTGFVHTAPSHGREDFEIWNAYKPLLEQFGIDSSIPFPVDDAGFYTKDAPGFGPNREGGAVRVIDDNGKMGDANKEVINALIKADRLFARGRLKHSYPHSWRSKKPVIFRNTPQWFISMDKDLGDGSTLRSRALEAVSMTRFVPSSGQSRLASMIADRPDWVLSRQRAWGVPICIFANEDGVILKDERVNERILRAFEAEGADAWFAEGARERFLGERAHESWVQVLDILDVWFDSGASHSFVLEDRDDLKWPADVYFEGSDQHRGWFQSSLLESCGTRACSPYKAVITHGFTLDENGKKMSKSLGNTVVPQEIIKTSGADIFRLWVMTTDYWEDQRLGKQILQTNMDLYRKLRNAIRWMLGILAHDEGEKISYCALPDLEKFILHQLFELDQLINRAYDEFDFKKIMRALLDFSITELSAFYFDIRKDSLYCDAPSSKKRKASLQVIREIFERMVIWLAPMLPFTMEEAWLEHSPKSHSVHLEQFRSVPGEWQNGFLAERWRKVRQVRKVVTGALEFERAAKRIGSSLEAAPIVFISNPVLLEALENLDMAEICITSALTITQDVPPSDAFILSDVEGVGVYPGKALGTKCARSWRYTQDVGSDPAYPDVSARDAAALRELQMLGKI.

The 'HIGH' region motif lies at 64 to 74 (PYANGHIHIGH). L-isoleucyl-5'-AMP is bound at residue glutamate 602. Positions 643–647 (KMSKS) match the 'KMSKS' region motif. An ATP-binding site is contributed by lysine 646.

The protein belongs to the class-I aminoacyl-tRNA synthetase family. IleS type 1 subfamily. Monomer.

The protein resides in the cytoplasm. The catalysed reaction is tRNA(Ile) + L-isoleucine + ATP = L-isoleucyl-tRNA(Ile) + AMP + diphosphate. Its function is as follows. Catalyzes the attachment of isoleucine to tRNA(Ile). As IleRS can inadvertently accommodate and process structurally similar amino acids such as valine, to avoid such errors it has two additional distinct tRNA(Ile)-dependent editing activities. One activity is designated as 'pretransfer' editing and involves the hydrolysis of activated Val-AMP. The other activity is designated 'posttransfer' editing and involves deacylation of mischarged Val-tRNA(Ile). This is Isoleucine--tRNA ligase from Bartonella quintana (strain Toulouse) (Rochalimaea quintana).